A 573-amino-acid chain; its full sequence is Sulfite reductase [NADPH] hemoprotein beta-component (573 aa).

Residues C438, C444, C483, and C487 each contribute to the [4Fe-4S] cluster site. C487 is a siroheme binding site.

The protein belongs to the nitrite and sulfite reductase 4Fe-4S domain family. As to quaternary structure, alpha(8)-beta(8). The alpha component is a flavoprotein, the beta component is a hemoprotein. It depends on siroheme as a cofactor. The cofactor is [4Fe-4S] cluster.

The enzyme catalyses hydrogen sulfide + 3 NADP(+) + 3 H2O = sulfite + 3 NADPH + 4 H(+). It functions in the pathway sulfur metabolism; hydrogen sulfide biosynthesis; hydrogen sulfide from sulfite (NADPH route): step 1/1. Component of the sulfite reductase complex that catalyzes the 6-electron reduction of sulfite to sulfide. This is one of several activities required for the biosynthesis of L-cysteine from sulfate. This Nitrosomonas europaea (strain ATCC 19718 / CIP 103999 / KCTC 2705 / NBRC 14298) protein is Sulfite reductase [NADPH] hemoprotein beta-component.